The sequence spans 252 residues: Uracil-DNA glycosylase (252 aa).

Residue aspartate 87 is the Proton acceptor of the active site.

The protein belongs to the uracil-DNA glycosylase (UDG) superfamily. UNG family.

Its subcellular location is the host nucleus. It catalyses the reaction Hydrolyzes single-stranded DNA or mismatched double-stranded DNA and polynucleotides, releasing free uracil.. In terms of biological role, excises uracil residues from the DNA which can arise as a result of misincorporation of dUMP residues by DNA polymerase or deamination of cytosines. Therefore may reduce deleterious uracil incorporation into the viral genome, particularly in terminally differentiated cells which lack DNA repair enzymes. The chain is Uracil-DNA glycosylase (46) from Alcelaphine herpesvirus 1 (strain C500) (AlHV-1).